Consider the following 585-residue polypeptide: Mitochondrial sodium/calcium exchanger protein (585 aa).

The signal sequence occupies residues 1–26 (MAGRWLDPLWAPGFLCVALILETASG). The Extracellular portion of the chain corresponds to 27-95 (AGDLSTKAHG…GIFCYFPPNL (69 aa)). N-linked (GlcNAc...) asparagine glycosylation occurs at N46. A helical transmembrane segment spans residues 96 to 116 (LPLAITLYVFWLLYLFLILGV). Over 117–140 (TAAKFFCPNLSAISTSLKLSHNVA) the chain is Cytoplasmic. A helical transmembrane segment spans residues 141 to 161 (GVTFLAFGNGAPDIFSALVAF). The Extracellular segment spans residues 162-168 (SDPRTAG). Residues 169 to 189 (LAIGALFGAGVLVTTVVAGGI) traverse the membrane as a helical segment. Topologically, residues 190 to 205 (TILRPFMAASRPFLRD) are cytoplasmic. Residues 206-226 (ITFYMVAVFLTFTALYLGRIT) form a helical membrane-spanning segment. Position 227 (L227) is a topological domain, extracellular. The chain crosses the membrane as a helical span at residues 228–247 (VWALGYLGLYVFYVVTVIIC). The Cytoplasmic portion of the chain corresponds to 248-325 (TWVYQRQRSR…KWRTQSISCK (78 aa)). Residue S258 is modified to Phosphoserine; by PKA. A helical membrane pass occupies residues 326–346 (LLKVAKLPVEFLLLLTVPVVD). At 347–360 (PDKDDRNWKRPLNC) the chain is on the extracellular side. The helical transmembrane segment at 361–381 (LQLVISPLVLVLTLQSGVYGI) threads the bilayer. Residues 382-383 (YE) lie on the Cytoplasmic side of the membrane. Residues 384 to 404 (IGGLLPVWAVVVIVGTALASV) traverse the membrane as a helical segment. The Extracellular segment spans residues 405–416 (TFFATSNSEPPR). A helical membrane pass occupies residues 417 to 437 (LHWLFAFLGFLTSALWINAAA). Topologically, residues 438–445 (TEVVNILR) are cytoplasmic. Residues 446 to 466 (SLGVVFRLSNTVLGLTLLAWG) form a helical membrane-spanning segment. Over 467 to 491 (NSIGDAFSDFTLARQGYPRMAFSAC) the chain is Extracellular. Residues 492–512 (FGGIIFNILVGVGLGCLLQIV) form a helical membrane-spanning segment. Residues 513–525 (RSHASEVKLEPDG) lie on the Cytoplasmic side of the membrane. Residues 526 to 546 (LLVWVLASALGLSLVFSLVSV) form a helical membrane-spanning segment. Residues 547 to 559 (PLQCFQLSKAYGL) lie on the Extracellular side of the membrane. A helical transmembrane segment spans residues 560–580 (CLLLFYICFIVVVLLTEFGVI). At 581 to 585 (HLKAD) the chain is on the cytoplasmic side.

It belongs to the Ca(2+):cation antiporter (CaCA) (TC 2.A.19) family. SLC24A subfamily. Phosphorylation at Ser-258 by PKA prevents calcium overload. Widely expressed. Present at higher level in pancreas, stomach, skeletal muscle and skin (at protein level). Ubiquitously expressed.

The protein localises to the mitochondrion inner membrane. The catalysed reaction is Ca(2+)(in) + 3 Na(+)(out) = Ca(2+)(out) + 3 Na(+)(in). The enzyme catalyses 3 Li(+)(out) + Ca(2+)(in) = 3 Li(+)(in) + Ca(2+)(out). Its activity is regulated as follows. Inhibited by the sodium/calcium exchanger inhibitor CGP-37157. Strongly inhibited by zinc. Its function is as follows. Mitochondrial sodium/calcium antiporter that mediates sodium-dependent calcium efflux from mitochondrion, by mediating the exchange of 3 sodium ions per 1 calcium ion. Plays a central role in mitochondrial calcium homeostasis by mediating mitochondrial calcium extrusion: calcium efflux is essential for mitochondrial function and cell survival, notably in cardiomyocytes. Regulates rates of glucose-dependent insulin secretion in pancreatic beta-cells during the first phase of insulin secretion: acts by mediating efflux of calcium from mitochondrion, thereby affecting cytoplasmic calcium responses. Required for store-operated Ca(2+) entry (SOCE) and Ca(2+) release-activated Ca(2+) (CRAC) channel regulation: sodium transport by SLC8B1 leads to promote calcium-shuttling that modulates mitochondrial redox status, thereby regulating SOCE activity. Involved in B-lymphocyte chemotaxis. Able to transport Ca(2+) in exchange of either Li(+) or Na(+), explaining how Li(+) catalyzes Ca(2+) exchange. In contrast to other members of the family its function is independent of K(+). The sequence is that of Mitochondrial sodium/calcium exchanger protein from Rattus norvegicus (Rat).